A 405-amino-acid polypeptide reads, in one-letter code: Transcriptional regulatory protein DEP1 (405 aa).

The segment covering 1-12 (MSQQTPQESEQT) has biased composition (low complexity). Disordered regions lie at residues 1–26 (MSQQTPQESEQTTAKEQDLDQESVLS) and 49–171 (AGTE…VMPS). Position 56 is a phosphoserine (Ser-56). Basic and acidic residues-rich tracts occupy residues 86–108 (SLKRPHEDEKEAIDEAKKMKVPG) and 116–139 (EEEKSQELEEAIDSKEKSTDARDE). Ser-120 carries the phosphoserine modification. Positions 140–157 (QGDEGDNEEENNEEDNEN) are enriched in acidic residues. Phosphoserine is present on Ser-370.

In terms of assembly, component of the RPD3C(L) complex composed of at least ASH1, CTI6, DEP1, PHO23, RPD3, RXT2, RXT3, SAP30, SDS3, SIN3, UME1 and UME6.

The protein localises to the cytoplasm. It is found in the nucleus. In terms of biological role, component of the RPD3C(L) histone deacetylase complex (HDAC) responsible for the deacetylation of lysine residues on the N-terminal part of the core histones (H2A, H2B, H3 and H4). Histone deacetylation gives a tag for epigenetic repression and plays an important role in transcriptional regulation, cell cycle progression and developmental events. The chain is Transcriptional regulatory protein DEP1 (DEP1) from Saccharomyces cerevisiae (strain ATCC 204508 / S288c) (Baker's yeast).